We begin with the raw amino-acid sequence, 460 residues long: uncharacterized protein (460 aa).

Positions 5–63 (TWHQGELIEVAIADLSDTGDGVGRFAERVVFVPDTVPGDRVLVRLLHVKPNYAHGKLHQ) constitute a TRAM domain. Residues Cys-76, Cys-82, Cys-85, and Cys-164 each contribute to the [4Fe-4S] cluster site. Residues Gln-288, Tyr-317, Glu-338, and Asp-383 each coordinate S-adenosyl-L-methionine. The active-site Nucleophile is the Cys-410.

It belongs to the class I-like SAM-binding methyltransferase superfamily. RNA M5U methyltransferase family.

This is an uncharacterized protein from Nostoc sp. (strain PCC 7120 / SAG 25.82 / UTEX 2576).